The sequence spans 93 residues: Beta-defensin 128 (93 aa).

The signal sequence occupies residues 1-18 (MKLFLVLIILLFEVLTDG). 3 disulfides stabilise this stretch: Cys24-Cys52, Cys32-Cys46, and Cys36-Cys53.

The protein belongs to the beta-defensin family.

The protein localises to the secreted. Its function is as follows. Has antibacterial activity. The chain is Beta-defensin 128 (DEFB128) from Pongo pygmaeus (Bornean orangutan).